Reading from the N-terminus, the 69-residue chain is ATP synthase F(0) complex subunit 8 (69 aa).

Residues 8-24 (TWLLTITLMILALFCIY) traverse the membrane as a helical segment. Lys55 is modified (N6-acetyllysine; alternate). Lys55 is modified (N6-succinyllysine; alternate). An N6-acetyllysine modification is found at Lys58.

The protein belongs to the ATPase protein 8 family. As to quaternary structure, component of the ATP synthase complex composed at least of ATP5F1A/subunit alpha, ATP5F1B/subunit beta, ATP5MC1/subunit c (homooctomer), MT-ATP6/subunit a, MT-ATP8/subunit 8, ATP5ME/subunit e, ATP5MF/subunit f, ATP5MG/subunit g, ATP5MK/subunit k, ATP5MJ/subunit j, ATP5F1C/subunit gamma, ATP5F1D/subunit delta, ATP5F1E/subunit epsilon, ATP5PF/subunit F6, ATP5PB/subunit b, ATP5PD/subunit d, ATP5PO/subunit OSCP. ATP synthase complex consists of a soluble F(1) head domain (subunits alpha(3) and beta(3)) - the catalytic core - and a membrane F(0) domain - the membrane proton channel (subunits c, a, 8, e, f, g, k and j). These two domains are linked by a central stalk (subunits gamma, delta, and epsilon) rotating inside the F1 region and a stationary peripheral stalk (subunits F6, b, d, and OSCP). Interacts with PRICKLE3.

Its subcellular location is the mitochondrion membrane. In terms of biological role, subunit 8, of the mitochondrial membrane ATP synthase complex (F(1)F(0) ATP synthase or Complex V) that produces ATP from ADP in the presence of a proton gradient across the membrane which is generated by electron transport complexes of the respiratory chain. ATP synthase complex consist of a soluble F(1) head domain - the catalytic core - and a membrane F(1) domain - the membrane proton channel. These two domains are linked by a central stalk rotating inside the F(1) region and a stationary peripheral stalk. During catalysis, ATP synthesis in the catalytic domain of F(1) is coupled via a rotary mechanism of the central stalk subunits to proton translocation. In vivo, can only synthesize ATP although its ATP hydrolase activity can be activated artificially in vitro. Part of the complex F(0) domain. This chain is ATP synthase F(0) complex subunit 8, found in Osphranter robustus (Wallaroo).